A 667-amino-acid chain; its full sequence is Bifunctional polymyxin resistance protein ArnA (667 aa).

Residues 1–304 (MKAIVFAYHD…EMGIVTDVRL (304 aa)) are formyltransferase ArnAFT. His104 (proton donor; for formyltransferase activity) is an active-site residue. Residues Arg114 and 136–140 (VKKAD) each bind (6R)-10-formyltetrahydrofolate. Residues 314 to 667 (RRTRVLILGV…TAAPKDELNA (354 aa)) form a dehydrogenase ArnADH region. NAD(+)-binding positions include Asp347 and 368-369 (DI). Residues Ala393, Tyr398, and 432 to 433 (TS) contribute to the UDP-alpha-D-glucuronate site. The active-site Proton acceptor; for decarboxylase activity is the Glu434. UDP-alpha-D-glucuronate contacts are provided by residues Arg460, Asn492, 526–535 (KLVDGGAQKR), and Tyr613. Arg619 acts as the Proton donor; for decarboxylase activity in catalysis.

It in the N-terminal section; belongs to the Fmt family. UDP-L-Ara4N formyltransferase subfamily. The protein in the C-terminal section; belongs to the NAD(P)-dependent epimerase/dehydratase family. UDP-glucuronic acid decarboxylase subfamily. Homohexamer, formed by a dimer of trimers.

The enzyme catalyses UDP-alpha-D-glucuronate + NAD(+) = UDP-beta-L-threo-pentopyranos-4-ulose + CO2 + NADH. It carries out the reaction UDP-4-amino-4-deoxy-beta-L-arabinose + (6R)-10-formyltetrahydrofolate = UDP-4-deoxy-4-formamido-beta-L-arabinose + (6S)-5,6,7,8-tetrahydrofolate + H(+). It participates in nucleotide-sugar biosynthesis; UDP-4-deoxy-4-formamido-beta-L-arabinose biosynthesis; UDP-4-deoxy-4-formamido-beta-L-arabinose from UDP-alpha-D-glucuronate: step 1/3. The protein operates within nucleotide-sugar biosynthesis; UDP-4-deoxy-4-formamido-beta-L-arabinose biosynthesis; UDP-4-deoxy-4-formamido-beta-L-arabinose from UDP-alpha-D-glucuronate: step 3/3. It functions in the pathway bacterial outer membrane biogenesis; lipopolysaccharide biosynthesis. Bifunctional enzyme that catalyzes the oxidative decarboxylation of UDP-glucuronic acid (UDP-GlcUA) to UDP-4-keto-arabinose (UDP-Ara4O) and the addition of a formyl group to UDP-4-amino-4-deoxy-L-arabinose (UDP-L-Ara4N) to form UDP-L-4-formamido-arabinose (UDP-L-Ara4FN). The modified arabinose is attached to lipid A and is required for resistance to polymyxin and cationic antimicrobial peptides. This chain is Bifunctional polymyxin resistance protein ArnA, found in Yersinia pestis bv. Antiqua (strain Antiqua).